A 567-amino-acid chain; its full sequence is MSRISRRAYADMFGPTVGDRVRLADTALWVEVEKDFTVYGEEVKFGGGKVIRDGMGQGQMLAAQAMDLVLTNALIIDHWGIVKADIGVKHGRIAAIGKAGNPDVQPGVTVPVGPGTEVIAAEGKIVTAGGIDSHIHFICPQQVEEALTSGVTTFIGGGTGPATGTNATTCTPGPWYLARMLQAADSLPINIGLLGKGNASRPEALREQIAAGAVGLKLHEDWGSTPAAIDCCLSVAEEMDIQVAIHTDTLNESGCIEDTLAAIGDRTIHTFHTEGAGGGHAPDIIRAAGQANVLPSSTNPTLPYTVNTVDEHLDMLMVCHHLDPSIAEDVAFAESRIRRETIAAEDILHDMGAFAMTSSDSQAMGRVGEVVLRTWQVAHQMKVRRGPLAPDSSYSDNFRVKRYIAKYTLNPALTHGIAHEVGSVEVGKLADLVLWSPAFFAVKPALVIKGGMIVTAPMGDINGSIPTPQPVHYRPMFGALGAARHATRMTFLPQAAMDRGLAQELGLQSLIGVAHGCRRVRKADMVHNTLQPVIEVDSQTYQVRADGELLVCEPASELPLAQRYFLF.

The Urease domain occupies 129-567; sequence GGIDSHIHFI…LPLAQRYFLF (439 aa). Ni(2+)-binding residues include His134, His136, and Lys217. Lys217 is subject to N6-carboxylysine. His219 lines the substrate pocket. Residues His246 and His272 each coordinate Ni(2+). His320 (proton donor) is an active-site residue. Residue Asp360 coordinates Ni(2+).

It belongs to the metallo-dependent hydrolases superfamily. Urease alpha subunit family. Heterotrimer of UreA (gamma), UreB (beta) and UreC (alpha) subunits. Three heterotrimers associate to form the active enzyme. It depends on Ni cation as a cofactor. In terms of processing, carboxylation allows a single lysine to coordinate two nickel ions.

The protein localises to the cytoplasm. The enzyme catalyses urea + 2 H2O + H(+) = hydrogencarbonate + 2 NH4(+). It participates in nitrogen metabolism; urea degradation; CO(2) and NH(3) from urea (urease route): step 1/1. The polypeptide is Urease subunit alpha (Pseudomonas putida (strain W619)).